A 375-amino-acid chain; its full sequence is Arsenite methyltransferase (375 aa).

Serine 335 carries the post-translational modification Phosphoserine.

It belongs to the methyltransferase superfamily. Arsenite methyltransferase family.

It is found in the cytoplasm. Its subcellular location is the cytosol. It catalyses the reaction arsenic triglutathione + [thioredoxin]-dithiol + S-adenosyl-L-methionine + 2 H2O = methylarsonous acid + [thioredoxin]-disulfide + 3 glutathione + S-adenosyl-L-homocysteine + H(+). The catalysed reaction is arsenic triglutathione + 2 [thioredoxin]-dithiol + 2 S-adenosyl-L-methionine + H2O = dimethylarsinous acid + 2 [thioredoxin]-disulfide + 3 glutathione + 2 S-adenosyl-L-homocysteine + 2 H(+). It carries out the reaction arsenic triglutathione + 3 [thioredoxin]-dithiol + 3 S-adenosyl-L-methionine = trimethylarsine + 3 [thioredoxin]-disulfide + 3 glutathione + 3 S-adenosyl-L-homocysteine + 3 H(+). Its function is as follows. Catalyzes the transfer of a methyl group from AdoMet to trivalent arsenicals producing methylated and dimethylated arsenicals. It methylates arsenite to form methylarsonate, Me-AsO(3)H(2), which is reduced by methylarsonate reductase to methylarsonite, Me-As(OH)2. Methylarsonite is also a substrate and it is converted into the much less toxic compound dimethylarsinate (cacodylate), Me(2)As(O)-OH. In Homo sapiens (Human), this protein is Arsenite methyltransferase (AS3MT).